We begin with the raw amino-acid sequence, 372 residues long: N-methyl-L-tryptophan oxidase (372 aa).

4 to 34 (DLIIIGSGSVGAAAGYYATRAGLNVLMTDAH) lines the FAD pocket. S-8alpha-FAD cysteine is present on cysteine 308.

This sequence belongs to the MSOX/MTOX family. MTOX subfamily. Monomer. Requires FAD as cofactor.

It carries out the reaction N(alpha)-methyl-L-tryptophan + O2 + H2O = L-tryptophan + formaldehyde + H2O2. In terms of biological role, catalyzes the oxidative demethylation of N-methyl-L-tryptophan. The sequence is that of N-methyl-L-tryptophan oxidase from Shigella sonnei (strain Ss046).